Here is a 705-residue protein sequence, read N- to C-terminus: Ribosomal RNA large subunit methyltransferase K/L (705 aa).

The 113-residue stretch at 42 to 154 (LAQKVCLSTR…RYGVSMYIDY (113 aa)) folds into the THUMP domain.

It belongs to the methyltransferase superfamily. RlmKL family.

The protein resides in the cytoplasm. The catalysed reaction is guanosine(2445) in 23S rRNA + S-adenosyl-L-methionine = N(2)-methylguanosine(2445) in 23S rRNA + S-adenosyl-L-homocysteine + H(+). The enzyme catalyses guanosine(2069) in 23S rRNA + S-adenosyl-L-methionine = N(2)-methylguanosine(2069) in 23S rRNA + S-adenosyl-L-homocysteine + H(+). Its function is as follows. Specifically methylates the guanine in position 2445 (m2G2445) and the guanine in position 2069 (m7G2069) of 23S rRNA. In Pseudoalteromonas translucida (strain TAC 125), this protein is Ribosomal RNA large subunit methyltransferase K/L.